The sequence spans 174 residues: FMN reductase (NADH) RutF (174 aa).

It belongs to the non-flavoprotein flavin reductase family. RutF subfamily.

The enzyme catalyses FMNH2 + NAD(+) = FMN + NADH + 2 H(+). Functionally, catalyzes the reduction of FMN to FMNH2 which is used to reduce pyrimidine by RutA via the Rut pathway. This chain is FMN reductase (NADH) RutF, found in Stutzerimonas stutzeri (strain A1501) (Pseudomonas stutzeri).